A 1665-amino-acid polypeptide reads, in one-letter code: Protein scribble homolog (1665 aa).

The sufficient for targeting to adherens junction and to inhibit cell proliferation stretch occupies residues 1 to 804 (MLKCIPLWRC…MRVWRERMVE (804 aa)). The residue at position 37 (Ser37) is a Phosphoserine. LRR repeat units follow at residues 37-58 (SLEELLLDANQLRELPKPFFRL), 60-81 (NLRKLGLSDNEIQRLPPEVANF), 83-104 (QLVELDVSRNDIPEIPESIKFC), 106-127 (ALEIADFSGNPLSRLPDGFTQL), 129-150 (SLAHLALNDVSLQALPGDVGNL), 152-174 (NLVTLELRENLLKSLPASLSFLV), 175-197 (KLEQLDLGGNDLEVLPDTLGALP), 198-219 (NLRELWLDRNQLSALPPELGNL), 221-243 (RLVCLDVSENRLEELPVELGGLA), 244-265 (LLTDLLLSQNLLQRLPEGIGQL), 267-288 (QLSILKVDQNRLCEVTEAIGDC), 290-312 (NLSELILTENLLTALPHSLGKLT), 313-334 (KLTNLNVDRNHLEVLPPEIGGC), 336-357 (ALSVLSLRDNRLAVLPPELAHT), 359-381 (ELHVLDVAGNRLRSLPFALTHLN), and 382-402 (LKALWLAENQAQPMLRFQTED). Phosphothreonine is present on Thr378. Disordered stretches follow at residues 422–615 (PSLE…HFKI) and 635–689 (REGP…SAPS). A compositionally biased stretch (polar residues) spans 428 to 437 (GQQSSPSESC). Residues 452 to 463 (DTLEGEEDAEEA) show a composition bias toward acidic residues. Positions 455–475 (EGEEDAEEAAAEKRGLQRRAT) form a coiled coil. At Thr475 the chain carries Phosphothreonine. Composition is skewed to basic and acidic residues over residues 479 to 494 (SELKVMKRGIEERRNE) and 570 to 580 (FAEDTLIPRED). At Ser583 the chain carries Phosphoserine. A coiled-coil region spans residues 653 to 687 (RAHEEEEEEEEENRDEEEGEATTEEDDKEEAVASA). Acidic residues predominate over residues 657–681 (EEEEEEEENRDEEEGEATTEEDDKE). A phosphothreonine mark is found at Thr674 and Thr675. Residues Ser694 and Ser750 each carry the phosphoserine modification. The interval 703-1215 (IEPARIEEEE…SLESISSIDR (513 aa)) is interaction with ARHGEF7. Residues 714-801 (TLTIVRQTGG…AVQMRVWRER (88 aa)) enclose the PDZ 1 domain. A required for interaction with VIM region spans residues 714–1180 (TLTIVRQTGG…TVLVCDGFDT (467 aa)). Thr812 is modified (phosphothreonine). Ser821, Ser861, and Ser925 each carry phosphoserine. PDZ domains are found at residues 848 to 936 (AACL…ERET), 990 to 1079 (EICL…RRDP), and 1086 to 1180 (ELCI…GFDT). Phosphoserine is present on residues Ser1126, Ser1206, Ser1209, Ser1212, Ser1218, Ser1262, Ser1265, and Ser1284. Basic and acidic residues predominate over residues 1213-1228 (IDRELSPEGPGKEKEL). Residues 1213–1246 (IDRELSPEGPGKEKELASQALPWESESAETTGRN) are disordered. Disordered regions lie at residues 1263 to 1325 (AGSL…DELP) and 1341 to 1501 (VHPP…AERR). Residues 1264–1277 (GSLQRGPSATTGGK) show a composition bias toward polar residues. Lys1291 is modified (omega-N-methylarginine). Ala1299 bears the Phosphoserine mark. Arg1312 is modified (omega-N-methylarginine). Ser1320 bears the Phosphoserine mark. Thr1353 is modified (phosphothreonine). Ser1359 bears the Phosphoserine mark. Residues 1364–1376 (SFRERQKYFELEV) show a composition bias toward basic and acidic residues. Ser1389 carries the post-translational modification Phosphoserine. The stretch at 1390–1421 (LVGADDLRKMQEEEARKLQQKRAQMLREEAVT) forms a coiled coil. Basic and acidic residues predominate over residues 1394 to 1406 (DDLRKMQEEEARK). 2 positions are modified to phosphoserine: Ser1455 and Ser1458. Positions 1471–1482 (AKAERRHQERLR) are enriched in basic and acidic residues. 3 positions are modified to phosphoserine: Ser1485, Ser1496, and Ser1518. Residues 1530–1577 (LSKSQEGRGKRGPLERLAEAPSPAPTPSPTPLEDFGLQTSASPGRLPL) are disordered. Residues 1534-1547 (QEGRGKRGPLERLA) are compositionally biased toward basic and acidic residues. Ser1551 carries the post-translational modification Phosphoserine. Thr1555 is modified (phosphothreonine). Ser1557, Ser1571, and Ser1601 each carry phosphoserine. Residues 1632–1665 (GRPSPGAVGPEDMTLCSSRRSVRPGRRGLGPVPS) are disordered.

The protein belongs to the LAP (LRR and PDZ) protein family. As to quaternary structure, interacts with UBE3A. Interacts with PAK1 and PAK2. Interacts (via PDZ domains) with VANGL2. Interacts (via PDZ domains) with LPP and TRIP6; the interaction is direct. Interacts (via PDZ domains) with TJP2. Interacts (via PDZ domains) with APC; may mediate APC targeting to adherens junctions of epithelial cells. Interacts (via PDZ domains) with TSHR; regulates TSHR trafficking and function. Interacts with ARHGEF7 and GIT1; interacts directly with ARHGEF7. Interacts with CTNNB1. Interacts with MAPK12. Interacts (via PDZ domains 1 and 3) with MCC. Interacts with DLG5. Interacts with STK4/MST1 and LATS1 in the presence of DLG5. Interacts (via PDZ domain 3) with CRTAM (via PDZ-binding motif); the interaction promotes CRTAM and SCRIB polarization in a subset of CD4+ T-cells. Interacts with YES1, when YES1 is in a closed conformation; the interaction facilitates YES1 autophosphorylation. Interacts (via PDZ domains) with VIM; the interaction protects SCRIB from proteasomal degradation and facilitates SCRIB localization to intermediate filaments, the interaction is reduced by cell contact inhibition. Ubiquitinated; targeted for UBE3A-dependent multiubiquitination and degraded. Post-translationally, palmitoylated. Could be depalmitoylated by LYPLA1 and/or LYPLA2. Palmitoylation of SCRIB by ZDHHC7 is required for its localization to cell-cell junctions, function in the establishement of epithelial cell polarity and the regulation of downstream signaling pathways important for epithelial cell differentiation. In terms of tissue distribution, expressed in CD4+ T-cells (at protein level). Found in a wide range of tissues including liver, kidney and spleen. Also expressed in the brain (at protein level).

The protein localises to the cell membrane. The protein resides in the cell junction. It localises to the adherens junction. Its subcellular location is the cell projection. It is found in the lamellipodium. The protein localises to the cytoplasm. The protein resides in the postsynapse. It localises to the presynapse. In terms of biological role, scaffold protein involved in different aspects of polarized cell differentiation regulating epithelial and neuronal morphogenesis and T-cell polarization. Via its interaction with CRTAM, required for the late phase polarization of a subset of CD4+ T-cells, which in turn regulates TCR-mediated proliferation and IFNG and IL22 production. Plays a role in cell directional movement, cell orientation, cell sheet organization and Golgi complex polarization at the cell migration front. Promotes epithelial cell layer barrier function via maintaining cell-cell adhesion. Most probably functions in the establishment of apico-basal cell polarity. May function in cell proliferation regulating progression from G1 to S phase and as a positive regulator of apoptosis for instance during acinar morphogenesis of the mammary epithelium. May regulate cell invasion via MAPK-mediated cell migration and adhesion. May play a role in exocytosis and in the targeting of synaptic vesicles to synapses. Functions as an activator of Rac GTPase activity. The protein is Protein scribble homolog of Mus musculus (Mouse).